We begin with the raw amino-acid sequence, 164 residues long: Probable ubiquitin-conjugating enzyme E2 7 (164 aa).

Positions 3–163 constitute a UBC core domain; the sequence is QSSLLLKKQL…VAQCVRRSQE (161 aa). Residue C88 is the Glycyl thioester intermediate of the active site.

This sequence belongs to the ubiquitin-conjugating enzyme family.

It catalyses the reaction S-ubiquitinyl-[E1 ubiquitin-activating enzyme]-L-cysteine + [E2 ubiquitin-conjugating enzyme]-L-cysteine = [E1 ubiquitin-activating enzyme]-L-cysteine + S-ubiquitinyl-[E2 ubiquitin-conjugating enzyme]-L-cysteine.. Its pathway is protein modification; protein ubiquitination. Catalyzes the covalent attachment of ubiquitin to other proteins. This chain is Probable ubiquitin-conjugating enzyme E2 7 (ubc-7), found in Caenorhabditis elegans.